The sequence spans 518 residues: MLLTILKSLLVIFVTTILRVLYDTISCYWLTPRRIKKIMEQQGVTGPKPRPLTGNILEISAMVSQSASKDCDSIHHDIVGRLLPHYVAWSKQYGKRFIVWNGTDPRLCLTETELIKELLMKHNGVSGRSWLQQQGTKNFIGRGLLMANGQDWHHQRHLAAPAFTGERLKGYARHMVECTSKLVERLRKEVGEGANEVEIGEEMHKLTADIISRTKFGSSFEKGKELFNHLTVLQRRCAQATRHLCFPGSRFLPSKYNREIKSLKKEVERLLIEIIQSRRDCAEMGRSSTHGDDLLGLLLNEMDIDKNNNNNNNNLQLIMDECKTFFFAGHETTALLLTWTTMLLADNPTWQEKVREEVREVFGRNGLPSVDQLSKLTSLSKVINESLRLYPPATLLPRMAFEDLKLGDLTIPKGLSIWIPVLAIHHSEELWGKDANQFNPERFGGRPFASGRHFIPFAAGPRNCIGQQFALMEAKIILATLISKFNFTISKNYRHAPIVVLTIKPKYGVQVILKPLVS.

Residues 1-21 (MLLTILKSLLVIFVTTILRVL) form a helical membrane-spanning segment. C464 is a heme binding site.

This sequence belongs to the cytochrome P450 family. It depends on heme as a cofactor. As to expression, expressed in roots and flowers.

It localises to the membrane. It catalyses the reaction N(6)-(dimethylallyl)adenosine 5'-phosphate + NADPH + O2 + H(+) = 9-ribosyl-trans-zeatin 5'-phosphate + NADP(+) + H2O. The catalysed reaction is N(6)-(dimethylallyl)adenosine 5'-diphosphate + NADPH + O2 + H(+) = 9-ribosyl-trans-zeatin 5'-diphosphate + NADP(+) + H2O. The enzyme catalyses N(6)-(dimethylallyl)adenosine 5'-triphosphate + NADPH + O2 + H(+) = 9-ribosyl-trans-zeatin 5'-triphosphate + NADP(+) + H2O. Functionally, cytokinin hydroxylase that catalyzes the biosynthesis of trans-zeatin via the isopentenyladenine riboside 5'-monophosphate (iPRMP)-dependent pathway. Can use isopentenyladenosine-5'-monophosphate, isopentenyladenosine-5'-diphosphate and isopentenyladenosine-5'-triphosphate as substrate. In Arabidopsis thaliana (Mouse-ear cress), this protein is Cytokinin hydroxylase (CYP735A1).